The following is a 194-amino-acid chain: Peptidyl-tRNA hydrolase (194 aa).

Position 17 (Y17) interacts with tRNA. H22 (proton acceptor) is an active-site residue. TRNA contacts are provided by F68, N70, and N116.

This sequence belongs to the PTH family. In terms of assembly, monomer.

The protein resides in the cytoplasm. It catalyses the reaction an N-acyl-L-alpha-aminoacyl-tRNA + H2O = an N-acyl-L-amino acid + a tRNA + H(+). Functionally, hydrolyzes ribosome-free peptidyl-tRNAs (with 1 or more amino acids incorporated), which drop off the ribosome during protein synthesis, or as a result of ribosome stalling. Catalyzes the release of premature peptidyl moieties from peptidyl-tRNA molecules trapped in stalled 50S ribosomal subunits, and thus maintains levels of free tRNAs and 50S ribosomes. This chain is Peptidyl-tRNA hydrolase, found in Proteus mirabilis (strain HI4320).